The following is a 420-amino-acid chain: D-tagatose-1,6-bisphosphate aldolase subunit GatZ (420 aa).

This sequence belongs to the GatZ/KbaZ family. GatZ subfamily. As to quaternary structure, forms a complex with GatY.

It functions in the pathway carbohydrate metabolism; D-tagatose 6-phosphate degradation; D-glyceraldehyde 3-phosphate and glycerone phosphate from D-tagatose 6-phosphate: step 2/2. Component of the tagatose-1,6-bisphosphate aldolase GatYZ that is required for full activity and stability of the Y subunit. Could have a chaperone-like function for the proper and stable folding of GatY. When expressed alone, GatZ does not show any aldolase activity. Is involved in the catabolism of galactitol. The chain is D-tagatose-1,6-bisphosphate aldolase subunit GatZ from Escherichia coli O6:K15:H31 (strain 536 / UPEC).